Reading from the N-terminus, the 326-residue chain is Aspartate carbamoyltransferase catalytic subunit (326 aa).

Positions 58 and 59 each coordinate carbamoyl phosphate. Residue Lys86 coordinates L-aspartate. Residues Arg108, His141, and Gln144 each contribute to the carbamoyl phosphate site. L-aspartate contacts are provided by Arg181 and Arg239. Gly280 and Pro281 together coordinate carbamoyl phosphate.

Belongs to the aspartate/ornithine carbamoyltransferase superfamily. ATCase family. In terms of assembly, heterododecamer (2C3:3R2) of six catalytic PyrB chains organized as two trimers (C3), and six regulatory PyrI chains organized as three dimers (R2).

The catalysed reaction is carbamoyl phosphate + L-aspartate = N-carbamoyl-L-aspartate + phosphate + H(+). The protein operates within pyrimidine metabolism; UMP biosynthesis via de novo pathway; (S)-dihydroorotate from bicarbonate: step 2/3. In terms of biological role, catalyzes the condensation of carbamoyl phosphate and aspartate to form carbamoyl aspartate and inorganic phosphate, the committed step in the de novo pyrimidine nucleotide biosynthesis pathway. The sequence is that of Aspartate carbamoyltransferase catalytic subunit from Synechococcus sp. (strain JA-3-3Ab) (Cyanobacteria bacterium Yellowstone A-Prime).